The primary structure comprises 459 residues: Inositol-trisphosphate 3-kinase A (459 aa).

Residues 1 to 26 (MTLPGHPTGMARPRGAGPCSPGLERA) form a disordered region. Residues Arg35, Arg55, and Arg62 each carry the omega-N-methylarginine modification. Residues 49–164 (AAAGEPRARG…TSEDVGQKSH (116 aa)) are disordered. The span at 116–132 (RRLSTSSLSSTGSSSLL) shows a compositional bias: low complexity. Phosphoserine is present on residues Ser135 and Ser195. ATP contacts are provided by residues Ser195, Lys207, 247–249 (QDL), and Asp260. 2 residues coordinate substrate: Lys262 and Arg283. The calmodulin-binding stretch occupies residues 285 to 293 (DMYKKMLAV). 310–317 (KPRYMQWR) provides a ligand contact to substrate. Lys334 and Asp414 together coordinate ATP. Residue Lys417 participates in substrate binding.

The protein belongs to the inositol phosphokinase (IPK) family.

The protein resides in the cytoplasm. It localises to the cytoskeleton. The enzyme catalyses 1D-myo-inositol 1,4,5-trisphosphate + ATP = 1D-myo-inositol 1,3,4,5-tetrakisphosphate + ADP + H(+). Its activity is regulated as follows. Activated by calcium/calmodulin. Its function is as follows. Catalyzes the phosphorylation of 1D-myo-inositol 1,4,5-trisphosphate (InsP3) into 1D-myo-inositol 1,3,4,5-tetrakisphosphate and participates to the regulation of calcium homeostasis. In Rattus norvegicus (Rat), this protein is Inositol-trisphosphate 3-kinase A.